Consider the following 184-residue polypeptide: MNAASTNNGPKIQLIGEVLEDAGLISEAQLQTALFDQQIYSDLKFGEILTLRGWIRQPTADFFAKYAKQELILIDSKRLGDYLLEADLLTTEQLALILDEQRLNHMLFGSLAVLKGYIPQKTLNFFLRRILNQHVGDRRFWQTTHHPKTSLAQQPNAKATQPPLSKETLNTAKETDPTEINWIG.

Residues 146-177 are disordered; the sequence is HPKTSLAQQPNAKATQPPLSKETLNTAKETDP. The span at 150 to 172 shows a compositional bias: polar residues; the sequence is SLAQQPNAKATQPPLSKETLNTA.

This is an uncharacterized protein from Picosynechococcus sp. (strain ATCC 27264 / PCC 7002 / PR-6) (Agmenellum quadruplicatum).